A 146-amino-acid polypeptide reads, in one-letter code: Putative calcium-binding protein CML19 (146 aa).

4 consecutive EF-hand domains span residues 3-38, 40-75, 79-114, and 115-146; these read AATA…ALGE, MSAE…LEMG, ERCR…LGSH, and QGIE…MMDA. Ca(2+) is bound by residues Asp-16, Asp-18, Asp-20, Lys-22, Glu-27, Asp-53, Asp-55, Asp-57, and Glu-64. Residues Asp-128, Asp-130, Asp-132, and Glu-139 each coordinate Ca(2+).

Functionally, potential calcium sensor. This Oryza sativa subsp. japonica (Rice) protein is Putative calcium-binding protein CML19 (CML19).